A 99-amino-acid chain; its full sequence is HssA/B-like protein 42 (99 aa).

Residues 1–29 form a disordered region; it reads MTLFSSISSMSTSMSGSKSSISSFGSGTS.

This sequence belongs to the hssA/B family.

In Dictyostelium discoideum (Social amoeba), this protein is HssA/B-like protein 42 (hssl42).